The primary structure comprises 518 residues: Integrator complex subunit 14 (518 aa).

Residues 2–204 (PTVVVMDVSL…KNVQSMFGKL (203 aa)) enclose the VWFA domain. S10, S12, and T86 together coordinate Mg(2+).

Belongs to the Integrator subunit 14 family. In terms of assembly, component of the Integrator complex, composed of core subunits INTS1, INTS2, INTS3, INTS4, INTS5, INTS6, INTS7, INTS8, INTS9/RC74, INTS10, INTS11/CPSF3L, INTS12, INTS13, INTS14 and INTS15. The core complex associates with protein phosphatase 2A subunits PPP2CA and PPP2R1A, to form the Integrator-PP2A (INTAC) complex. INTS14 is part of the tail subcomplex, composed of INTS10, INTS13, INTS14 and INTS15.

The protein localises to the nucleus. In terms of biological role, component of the integrator complex, a multiprotein complex that terminates RNA polymerase II (Pol II) transcription in the promoter-proximal region of genes. The integrator complex provides a quality checkpoint during transcription elongation by driving premature transcription termination of transcripts that are unfavorably configured for transcriptional elongation: the complex terminates transcription by (1) catalyzing dephosphorylation of the C-terminal domain (CTD) of Pol II subunit POLR2A/RPB1 and SUPT5H/SPT5, (2) degrading the exiting nascent RNA transcript via endonuclease activity and (3) promoting the release of Pol II from bound DNA. The integrator complex is also involved in terminating the synthesis of non-coding Pol II transcripts, such as enhancer RNAs (eRNAs), small nuclear RNAs (snRNAs), telomerase RNAs and long non-coding RNAs (lncRNAs). Within the integrator complex, INTS14 is part of the integrator tail module that acts as a platform for the recruitment of transcription factors at promoters. In Xenopus tropicalis (Western clawed frog), this protein is Integrator complex subunit 14.